The chain runs to 906 residues: Peroxisomal hydratase-dehydrogenase-epimerase (906 aa).

Short-chain dehydrogenase like regions lie at residues 5–228 and 319–532; these read DFKD…SSAE and SLKD…GTDD. The NADP(+) site is built by Ile13, Lys52, Asn98, and Lys131. Residues Ser149 and Tyr163 each act as proton donor in the active site. Residues Tyr163 and Lys167 each coordinate NADP(+). The active-site Proton acceptor is the Tyr163. Catalysis depends on Lys167, which acts as the Lowers pKa of active site Tyr. Tyr467 (proton acceptor) is an active-site residue. The interval 600-633 is disordered; that stretch reads AVGGDDDDDDEDEEEDEGDEEEDEEDEEEDDPVW. The segment covering 603–630 has biased composition (acidic residues); it reads GDDDDDDEDEEEDEGDEEEDEEDEEEDD. Residues His699, Gly700, Lys729, Tyr757, Asp808, Asn810, Gly831, Phe856, Thr857, and Gly858 each coordinate (3R)-3-hydroxydecanoyl-CoA. One can recognise a MaoC-like domain in the interval 782–893; sequence APKRAPDYQV…VVDRGTIAIN (112 aa). The short motif at 904 to 906 is the Microbody targeting signal element; the sequence is AKI.

This sequence belongs to the short-chain dehydrogenases/reductases (SDR) family. In terms of assembly, monomer.

It is found in the peroxisome. The enzyme catalyses a (3R)-3-hydroxyacyl-CoA = a (2E)-enoyl-CoA + H2O. It catalyses the reaction a (3R)-3-hydroxyacyl-CoA + NAD(+) = a 3-oxoacyl-CoA + NADH + H(+). It functions in the pathway lipid metabolism; fatty acid beta-oxidation. Its function is as follows. Second trifunctional enzyme acting on the beta-oxidation pathway for fatty acids, possessing hydratase-dehydrogenase-epimerase activities. Converts trans-2-enoyl-CoA via D-3-hydroxyacyl-CoA to 3-ketoacyl-CoA. In Candida tropicalis (Yeast), this protein is Peroxisomal hydratase-dehydrogenase-epimerase.